A 218-amino-acid polypeptide reads, in one-letter code: Adenylate kinase (218 aa).

Residue 11–16 (GAGKGT) participates in ATP binding. Residues 31–60 (STGDMFREAMANKTKVGLEAKSYIDKGNLV) are NMP. AMP-binding positions include Thr-32, Arg-37, 58–60 (NLV), 86–89 (GFPR), and Gln-93. The interval 127-165 (ARYMCKNCGATYNKLSKQPKVEGTCDRCGSHEFYQREDD) is LID. An ATP-binding site is contributed by Arg-128. Zn(2+) contacts are provided by Cys-131 and Cys-134. 137-138 (TY) is an ATP binding site. Zn(2+) is bound by residues Cys-151 and Cys-154. Arg-162 and Arg-173 together coordinate AMP. Gln-201 is a binding site for ATP.

This sequence belongs to the adenylate kinase family. In terms of assembly, monomer.

The protein localises to the cytoplasm. It carries out the reaction AMP + ATP = 2 ADP. It functions in the pathway purine metabolism; AMP biosynthesis via salvage pathway; AMP from ADP: step 1/1. Its function is as follows. Catalyzes the reversible transfer of the terminal phosphate group between ATP and AMP. Plays an important role in cellular energy homeostasis and in adenine nucleotide metabolism. This is Adenylate kinase from Lactobacillus helveticus (strain DPC 4571).